The following is a 62-amino-acid chain: Small ribosomal subunit protein uS14 (62 aa).

Zn(2+) is bound by residues Cys-25, Cys-28, Cys-41, and Cys-44.

The protein belongs to the universal ribosomal protein uS14 family. Zinc-binding uS14 subfamily. In terms of assembly, part of the 30S ribosomal subunit. Contacts proteins S3 and S10. The cofactor is Zn(2+).

In terms of biological role, binds 16S rRNA, required for the assembly of 30S particles and may also be responsible for determining the conformation of the 16S rRNA at the A site. The sequence is that of Small ribosomal subunit protein uS14 from Hydrogenobaculum sp. (strain Y04AAS1).